The primary structure comprises 209 residues: MSRSTRYSVAVSAQPETGQIAGRARIANLANILTLLRLVMVPVFLLALFYGGGHHSAARVVAWAIFATACITDRFDGLLARNYGMATEFGAFVDPIADKTLIGSALIGLSMLGDLPWWVTVLILTRELGVTVLRLAVIRRGVIPASWGGKLKTFVQAVAIGLFVLPLSGPLHVAAVVVMAAAILLTVITGVDYVARALRDIGGIRQTAS.

The next 4 membrane-spanning stretches (helical) occupy residues 32-52 (ILTL…FYGG), 105-125 (ALIG…LILT), 147-167 (WGGK…VLPL), and 171-191 (LHVA…ITGV).

This sequence belongs to the CDP-alcohol phosphatidyltransferase class-I family.

Its subcellular location is the cell membrane. The catalysed reaction is a CDP-1,2-diacyl-sn-glycerol + sn-glycerol 3-phosphate = a 1,2-diacyl-sn-glycero-3-phospho-(1'-sn-glycero-3'-phosphate) + CMP + H(+). It participates in lipid metabolism; phospholipid metabolism. Functionally, probably catalyzes the synthesis of phosphatidylglycerophosphate by transferring a phosphatidyl group from CDP-diacylglycerol to glycerol 3-phosphate. The polypeptide is Probable phosphatidylglycerophosphate synthase (Mycobacterium tuberculosis (strain CDC 1551 / Oshkosh)).